The sequence spans 105 residues: Small ribosomal subunit protein eS24 (105 aa).

Positions 86–105 (LERNKIEADEEADEEAAEEA) are disordered. The segment covering 93 to 105 (ADEEADEEAAEEA) has biased composition (acidic residues).

Belongs to the eukaryotic ribosomal protein eS24 family.

This is Small ribosomal subunit protein eS24 from Natronomonas pharaonis (strain ATCC 35678 / DSM 2160 / CIP 103997 / JCM 8858 / NBRC 14720 / NCIMB 2260 / Gabara) (Halobacterium pharaonis).